The primary structure comprises 502 residues: 4,4'-diaponeurosporene oxygenase (502 aa).

I8–I20 provides a ligand contact to FAD.

This sequence belongs to the carotenoid/retinoid oxidoreductase family. CrtP subfamily. Requires FAD as cofactor.

It catalyses the reaction all-trans-4,4'-diaponeurosporene + 2 AH2 + 2 O2 = 4,4'-diaponeurosporenal + 2 A + 3 H2O. It participates in carotenoid biosynthesis; staphyloxanthin biosynthesis; staphyloxanthin from farnesyl diphosphate: step 3/5. Functionally, involved in the biosynthesis of the yellow-orange carotenoid staphyloxanthin, which plays a role in the virulence via its protective function against oxidative stress. Catalyzes the oxidation of the terminal methyl side group of 4,4'-diaponeurosporene to form 4,4'-diaponeurosporen-4-al. The protein is 4,4'-diaponeurosporene oxygenase of Staphylococcus haemolyticus (strain JCSC1435).